The primary structure comprises 255 residues: Urease accessory protein UreD 1 (255 aa).

The protein belongs to the UreD family. UreD, UreF and UreG form a complex that acts as a GTP-hydrolysis-dependent molecular chaperone, activating the urease apoprotein by helping to assemble the nickel containing metallocenter of UreC. The UreE protein probably delivers the nickel.

It localises to the cytoplasm. In terms of biological role, required for maturation of urease via the functional incorporation of the urease nickel metallocenter. The chain is Urease accessory protein UreD 1 from Saccharopolyspora erythraea (strain ATCC 11635 / DSM 40517 / JCM 4748 / NBRC 13426 / NCIMB 8594 / NRRL 2338).